Consider the following 293-residue polypeptide: Large ribosomal subunit protein uL4c (293 aa).

Residues 1–50 constitute a chloroplast transit peptide; sequence MATSTSSSLSLSFFSSSLFSSKSRNFSSKPILKLPSSSHSQTSLSLSIKS. Disordered regions lie at residues 107–138 and 259–293; these read EVRG…PGGG and YGVD…EPAE. The span at 116 to 126 shows a compositional bias: basic residues; that stretch reads YPQKKTGRARR. Residues 263-293 are compositionally biased toward acidic residues; sequence TLEDEDEEEEEEEEGEEVDDGVEDGTPEPAE.

It belongs to the universal ribosomal protein uL4 family. In terms of assembly, component of the chloroplast large ribosomal subunit (LSU). Mature 70S chloroplast ribosomes of higher plants consist of a small (30S) and a large (50S) subunit. The 30S small subunit contains 1 molecule of ribosomal RNA (16S rRNA) and 24 different proteins. The 50S large subunit contains 3 rRNA molecules (23S, 5S and 4.5S rRNA) and 33 different proteins. In terms of tissue distribution, highly expressed in cotyledon and weakly in roots.

The protein localises to the plastid. It localises to the chloroplast. Functionally, component of the chloroplast ribosome (chloro-ribosome), a dedicated translation machinery responsible for the synthesis of chloroplast genome-encoded proteins, including proteins of the transcription and translation machinery and components of the photosynthetic apparatus. The protein is Large ribosomal subunit protein uL4c (RPL4) of Spinacia oleracea (Spinach).